The primary structure comprises 565 residues: Phosphatidylinositol 4-kinase gamma 4 (565 aa).

2 Ubiquitin-like domains span residues isoleucine 32–arginine 104 and arginine 109–lysine 187. Positions glycine 257–threonine 542 constitute a PI3K/PI4K catalytic domain. The G-loop stretch occupies residues serine 263–glycine 269. Residues threonine 264 to valine 270 and lysine 286 contribute to the ATP site. The tract at residues glutamate 291–lysine 311 is disordered. Residue glutamine 369–valine 372 coordinates ATP. The tract at residues alanine 402 to asparagine 410 is catalytic loop. Positions proline 425–glutamate 451 are activation loop. Position 427 (aspartate 427) interacts with ATP.

This sequence belongs to the PI3/PI4-kinase family. Type II PI4K subfamily. As to quaternary structure, interacts with FTIP1 and RPN10. Specifically expressed in the phloem including companion cells.

The protein localises to the nucleus. The protein resides in the endoplasmic reticulum. The catalysed reaction is a 1,2-diacyl-sn-glycero-3-phospho-(1D-myo-inositol) + ATP = a 1,2-diacyl-sn-glycero-3-phospho-(1D-myo-inositol 4-phosphate) + ADP + H(+). The phosphorylation of phosphatidylinositol (PI) to PI4P is the first committed step in the generation of phosphatidylinositol 4,5-bisphosphate (PIP2), a precursor of the second messenger inositol 1,4,5-trisphosphate (InsP3). Involved in the control of flowering under long day conditions by promoting degradation of FTIP1. Recruits FTIP1 for degradation by the 26S proteasome in leaves, which affects RFT1 transport to the shoot apical meristem (SAM). The sequence is that of Phosphatidylinositol 4-kinase gamma 4 from Oryza sativa subsp. japonica (Rice).